The chain runs to 82 residues: Large ribosomal subunit protein bL31B (82 aa).

Belongs to the bacterial ribosomal protein bL31 family. Type B subfamily. As to quaternary structure, part of the 50S ribosomal subunit.

The protein is Large ribosomal subunit protein bL31B of Proteus mirabilis (strain HI4320).